The following is a 672-amino-acid chain: Protein OS-9 (672 aa).

A signal peptide spans 1–26; the sequence is MAAEVLLSSLLGLLFLGLLLPARLTG. An MRH domain is found at 108 to 230; it reads APCLLKTKDW…TIRTSRLCPH (123 aa). Residues Cys-110 and Cys-123 are joined by a disulfide bond. 3 residues coordinate a mannooligosaccharide derivative: Trp-117, Trp-118, and Gln-130. An N-linked (GlcNAc...) asparagine glycan is attached at Asn-177. 2 cysteine pairs are disulfide-bonded: Cys-181–Cys-216 and Cys-196–Cys-228. A mannooligosaccharide derivative is bound by residues Asp-182, Arg-188, Glu-212, and Tyr-218. 4 disordered regions span residues 261–355, 372–452, 511–548, and 637–672; these read RQAE…NVQV, KAAE…LLPS, ENQSPELVQKYKKRRVVPQKPPPSPHPTEEEPEHRVRV, and EANKERQRQSELESNYRRVWGSPGGEDTGDLDEFDF. Composition is skewed to basic and acidic residues over residues 263 to 281, 294 to 310, 320 to 338, 372 to 386, and 394 to 409; these read AESKQHEEKTTEEVQDTDR, PKKEDVSPAKEEKESEL, AAAREEAQAGEQDLNHEAA, KAAEKGKPSVRREQP, and PQREAEGTKAKGKDGE. Positions 414-435 are enriched in acidic residues; the sequence is MEEEDGDDEEEEEEEEEDEEEQ. Basic and acidic residues predominate over residues 637–652; that stretch reads EANKERQRQSELESNY. A compositionally biased stretch (acidic residues) spans 663 to 672; it reads DTGDLDEFDF.

It belongs to the OS-9 family. In terms of assembly, component of the HRD1 complex, which comprises at least SYNV1/HRD1, DERL1/2, FAM8A1, HERPUD1/HERP, OS9, SEL1L and UBE2J1. FAM8A1 is stabilized by interaction with SYNV1, which prevents its proteasomal degradation. OS9 and UBE2J1 recruitment to the complex may be mediated by SEL1L. Through this complex, may interact with ERLEC1 and HSPA5. Interacts (via C-terminus) with CPNE6 (via second C2 domain); this interaction occurs in a calcium-dependent manner in vitro. Interacts with CREB3. In terms of processing, N-glycosylated. Intramolecular disulfide bonds.

It localises to the endoplasmic reticulum lumen. Functionally, lectin component of the HRD1 complex, which functions in endoplasmic reticulum (ER) quality control and ER-associated degradation (ERAD). Specifically recognizes and binds improperly folded glycoproteins as well as hyperglycosylated proteins, retain them in the ER, and transfers them to the ubiquitination machinery and promote their degradation. Possible targets include TRPV4 as well as hyperglycosylated HSP90B1. The chain is Protein OS-9 (Os9) from Mus musculus (Mouse).